The primary structure comprises 121 residues: Large ribosomal subunit protein bL12 (121 aa).

The protein belongs to the bacterial ribosomal protein bL12 family. As to quaternary structure, homodimer. Part of the ribosomal stalk of the 50S ribosomal subunit. Forms a multimeric L10(L12)X complex, where L10 forms an elongated spine to which 2 to 4 L12 dimers bind in a sequential fashion. Binds GTP-bound translation factors.

Forms part of the ribosomal stalk which helps the ribosome interact with GTP-bound translation factors. Is thus essential for accurate translation. This Xanthomonas euvesicatoria pv. vesicatoria (strain 85-10) (Xanthomonas campestris pv. vesicatoria) protein is Large ribosomal subunit protein bL12.